The sequence spans 228 residues: Urease accessory protein UreF 1 (228 aa).

Belongs to the UreF family. As to quaternary structure, ureD, UreF and UreG form a complex that acts as a GTP-hydrolysis-dependent molecular chaperone, activating the urease apoprotein by helping to assemble the nickel containing metallocenter of UreC. The UreE protein probably delivers the nickel.

The protein resides in the cytoplasm. In terms of biological role, required for maturation of urease via the functional incorporation of the urease nickel metallocenter. This chain is Urease accessory protein UreF 1, found in Brucella canis (strain ATCC 23365 / NCTC 10854 / RM-666).